Here is a 502-residue protein sequence, read N- to C-terminus: Neuronal acetylcholine receptor subunit alpha-7 (502 aa).

The N-terminal stretch at 1 to 22 (MCGRRGGIWLALAAALLHVSLQ) is a signal peptide. The Extracellular portion of the chain corresponds to 23-233 (GEFQRRLYKE…VTMRRRTLYY (211 aa)). 2 residues coordinate Ca(2+): Arg-42 and Val-44. N-linked (GlcNAc...) asparagine glycans are attached at residues Asn-46, Asn-90, and Asn-133. A disulfide bond links Cys-150 and Cys-164. Ca(2+) contacts are provided by Ser-172 and Tyr-210. Cys-212 and Cys-213 are oxidised to a cystine. A run of 3 helical transmembrane segments spans residues 234–254 (GLNL…VFLL), 262–282 (ISLG…VAEI), and 295–315 (QYFA…VIVL). Residues 260–267 (EKISLGIT) are essential for TMEM35A/NACHO-mediated proper subunit assembly and trafficking to cell membrane. Residues 316–469 (RYHHHDPDGG…WKFAACVVDR (154 aa)) are Cytoplasmic-facing. Residues 470-490 (LCLMAFSVFTIICTIGILMSA) form a helical membrane-spanning segment.

It belongs to the ligand-gated ion channel (TC 1.A.9) family. Acetylcholine receptor (TC 1.A.9.1) subfamily. Alpha-7/CHRNA7 sub-subfamily. Homopentamer. Can also form heteropentamers with CHRNB2, mainly found in basal forebrain cholinergic neurons. Interacts with RIC3; which is required for proper folding and assembly. Interacts with LYPD6. Interacts with CANX. Glycosylations at Asn-46, Asn-90 and Asn-133 are essential for TMEM35A/NACHO-mediated proper subunit assembly and trafficking to the cell membrane. Higly expressed in brain. ALso expressed in immune cells sucha as macrophages.

Its subcellular location is the postsynaptic cell membrane. The protein localises to the cell membrane. It catalyses the reaction K(+)(in) = K(+)(out). It carries out the reaction Na(+)(in) = Na(+)(out). The enzyme catalyses Ca(2+)(in) = Ca(2+)(out). The catalysed reaction is choline(out) = choline(in). It catalyses the reaction NH4(+)(in) = NH4(+)(out). It carries out the reaction L-arginine(in) = L-arginine(out). The enzyme catalyses guanidine(out) = guanidine(in). With respect to regulation, activated by a myriad of ligands such as acetylcholine, cytisine, nicotine, choline and epibatidine. Oligomeric amyloid-beta protein 42 activates specifially CHRNA7:CHRNB2 nAchRs. Activity is modulated by positive allosteric modulators (PAMs), such as flavonoids, with a wide range of chemical diversity, pharmacological sensitivity and efficacy. AChR activity is inhibited by the antagonists alpha-conotoxons RgIA, ImI and ImII, small disulfide-constrained peptides from cone snails. Functionally, component of neuronal acetylcholine receptors (nAChRs) that function as pentameric, ligand-gated cation channels with high calcium permeability among other activities. nAChRs are excitatory neurotrasnmitter receptors formed by a collection of nAChR subunits known to mediate synaptic transmission in the nervous system and the neuromuscular junction. Each nAchR subunit confers differential attributes to channel properties, including activation, deactivation and desensitization kinetics, pH sensitivity, cation permeability, and binding to allosteric modulators. CHRNA7 forms homopentameric neuronal acetylcholine receptors abundantly expressed in the central nervous system, characterized by fast desensitization and high calcium permeability. Also forms heteropentamers with CHRNB2, mainly expressed in basal forebrain cholinergic neurons. Involved in the modulation of calcium-dependent signaling pathways and influences the release of neurotransmitters, including dopamine, glutamate and GABA. Involved in the modulation of calcium-dependent signaling pathways and influences the release of neurotransmitters, including dopamine, glutamate and GABA. Also expressed in non-neuronal cells such as immune cells like lymphocytes, monocytes and macrophages. In T cells, activation induces metabotropic signaling that results in an increase of intracellular Ca2+ concentrations, independent of ionotropic receptor functions. In macrophages, required for acetylcholine-mediated inhibition of TNF and other inflammatory cytokine release. Once activated by acetylcholine, nicotine or other agonists, selectively inhibits production of pro-inflammatory cytokines while leaving anti-inflammatory cytokines undisturbed. Stimulates the cholinergic anti-inflammatory pathway, controlling inflammation by inhibiting NFKB nuclear translocation and activating the JAK2-STAT3 pathway, independently of ion channel activity. Also expressed in the urothelium where it modulates reflex bladder activity by increasing intracellular calcium through internal stores and decreasing basal ATP release. The protein is Neuronal acetylcholine receptor subunit alpha-7 (Chrna7) of Mus musculus (Mouse).